The sequence spans 247 residues: Ribonuclease 3 (247 aa).

Residues 5-147 (LIALQERLQH…LIGAVYLDAG (143 aa)) enclose the RNase III domain. Residue Glu-40 participates in Mg(2+) binding. Asp-44 is a catalytic residue. Residues 104–124 (QRRSRRRCADELQPDEAGSGG) are disordered. Asp-133 and Glu-136 together coordinate Mg(2+). Glu-136 is a catalytic residue. Residues 174–244 (DAKTALQEWL…AAAMLATLKA (71 aa)) form the DRBM domain.

Belongs to the ribonuclease III family. In terms of assembly, homodimer. It depends on Mg(2+) as a cofactor.

Its subcellular location is the cytoplasm. The catalysed reaction is Endonucleolytic cleavage to 5'-phosphomonoester.. Functionally, digests double-stranded RNA. Involved in the processing of primary rRNA transcript to yield the immediate precursors to the large and small rRNAs (23S and 16S). Processes some mRNAs, and tRNAs when they are encoded in the rRNA operon. Processes pre-crRNA and tracrRNA of type II CRISPR loci if present in the organism. This Verminephrobacter eiseniae (strain EF01-2) protein is Ribonuclease 3.